Here is a 306-residue protein sequence, read N- to C-terminus: MRGISPKRVCPICGSTEFIYDPRRGEIVCAKCGYVIEENVVDEGPEWRAFEPGQREKRARTGAPMTLMIHDKGLSTDIDWRDKDIHGNQITGMYRNKLRRLRMWQRRMRINDAAERNLAFALSELDRMAAQLRLPRHLKEVAASLYRKAVMKKLIRGRSIEGMVSAALYAACRMEGIPRTLDEIASVSKVSKKEIGRSYRFMARGLGLNLRPTSPIEYVDRFGDALGVSARTKKRAKEILNEAIKRGITSGKGPTGLAAAALYIAALLEGEKKTQREVAEVAHVTEVTVRNRYKELVEKLGINVPI.

The TFIIB-type zinc finger occupies 6-37 (PKRVCPICGSTEFIYDPRRGEIVCAKCGYVIE). Positions 10, 13, 29, and 32 each coordinate Zn(2+). 2 repeat units span residues 123–206 (SELD…ARGL) and 217–298 (EYVD…ELVE).

Belongs to the TFIIB family.

In terms of biological role, stabilizes TBP binding to an archaeal box-A promoter. Also responsible for recruiting RNA polymerase II to the pre-initiation complex (DNA-TBP-TFIIB). In Thermococcus kodakarensis (strain ATCC BAA-918 / JCM 12380 / KOD1) (Pyrococcus kodakaraensis (strain KOD1)), this protein is Transcription initiation factor IIB 2.